The following is a 462-amino-acid chain: MNFSESFKLSGLLCRFSPDGKYLASCVQYRLVIRDVTTLQILQLYTCLDQIQHIEWSADSLFILCAMYRRGLVQVWSLEQPEWHCKIDEGSAGLVASCWSPDGRHILNTTEFHLRITVWSLCTKSVSYIKYPKACQQGLTFTRDGRYLALAERRDCRDYVSIFVCSDWQLLRHFDTDTQDLTGIEWAPNGCVLAAWDTCLEYKVLLYSLDGRLLSAYCAYEWSLGIKSVAWSPSSQFLAIGSYDGKVRLLNHVTWKMITEFGHPATINNPKTVVYKEAEKSPLLGLGHLSFPPPRAMAGALSTSESKYEIASGPVSLQTLKPVADRANPRMGVGMLAFSSDSYFLASRNDNVPNAVWIWDIQKLKLFVVLEHMSPVRSFQWDPQQPRLAICTGGSKVYLWSPAGCVSVQVPGEGDFPVLGLCWHLSGDSLALLSKDHFCLCFLETKERVGTAYEQRDGMPRT.

WD repeat units follow at residues T46–K86, E89–I129, T176–D210, and E221–E260. Residue S281 is modified to Phosphoserine. WD repeat units lie at residues N328–V369 and E371–V410.

In terms of assembly, interacts with SSX2IP. In terms of tissue distribution, ubiquitous.

Its subcellular location is the cytoplasm. The protein localises to the cytoskeleton. It localises to the microtubule organizing center. It is found in the centrosome. Its function is as follows. The SSX2IP:WRAP73 complex is proposed to act as regulator of spindle anchoring at the mitotic centrosome. Required for the centrosomal localization of SSX2IP and normal mitotic bipolar spindle morphology. Required for the targeting of centriole satellite proteins to centrosomes such as of PCM1, SSX2IP, CEP290 and PIBF1/CEP90. Required for ciliogenesis and involved in the removal of the CEP97:CCP110 complex from the mother centriole. Involved in ciliary vesicle formation at the mother centriole and required for the docking of vesicles to the basal body during ciliogenesis; may promote docking of RAB8A- and ARL13B-containing vesicles. This is WD repeat-containing protein WRAP73 (Wrap73) from Mus musculus (Mouse).